The sequence spans 255 residues: MSDSIHRRKVSNPVGNGGRSSRTRRTAFRYVSDKNNRSKSSNKVFERSFSEPSLNRHRDGQSNHLRRPSPMRGLPMEEETKPIVYLPRIRSEVFASSPSLLNLYSPSSSSPINQEGNTKEAPKVIISVAVEGSPGPVRAMVKLSCNVEETIKIVVDKYCKEGRTPKLDRDSAFELHQSHFSIQCLEKREIIGELGSRSFYMRKKAPETGGSFAGISPARTSLIPSSNLIGSCIAQLIGKIMRRTRRIWNILVCVQ.

The segment covering 1–10 (MSDSIHRRKV) has biased composition (basic residues). The disordered stretch occupies residues 1–78 (MSDSIHRRKV…SPMRGLPMEE (78 aa)). The segment covering 44 to 61 (VFERSFSEPSLNRHRDGQ) has biased composition (basic and acidic residues).

This is an uncharacterized protein from Arabidopsis thaliana (Mouse-ear cress).